Consider the following 165-residue polypeptide: Urease accessory protein UreE (165 aa).

This sequence belongs to the UreE family.

It localises to the cytoplasm. Involved in urease metallocenter assembly. Binds nickel. Probably functions as a nickel donor during metallocenter assembly. The sequence is that of Urease accessory protein UreE from Micrococcus luteus (strain ATCC 4698 / DSM 20030 / JCM 1464 / CCM 169 / CCUG 5858 / IAM 1056 / NBRC 3333 / NCIMB 9278 / NCTC 2665 / VKM Ac-2230) (Micrococcus lysodeikticus).